The sequence spans 272 residues: MDLLHAALLGLIQGATEVLPISSSGHLILIPRLLGWPDSGLTFDVALHFGTFLAIFVYFRKDVVSLVQDGLTGFFQPEAPRRLRLPWMIVLASIPAAIAGKTLEQPIEELFRSSPLMIALMLILFGLGLGLTDRYGKKLHDVASITLGTAMLVGCFQCLALVPGVSRSGITITAGLLLGLARTDAARFSFLLSLPIVFGAALLKGLHLLKHGIEPGMAMPMLVGVAVSAVVGYISVAFLLKFVQSRTLWPFVWYRVAAGIGVMALLGVGLLS.

Transmembrane regions (helical) follow at residues 39–59 (SGLT…FVYF), 87–107 (WMIV…EQPI), 113–133 (SSPL…GLTD), 145–165 (ITLG…VPGV), 188–208 (FSFL…GLHL), 220–240 (PMLV…AFLL), and 251–271 (FVWY…VGLL).

The protein belongs to the UppP family.

The protein localises to the cell inner membrane. The enzyme catalyses di-trans,octa-cis-undecaprenyl diphosphate + H2O = di-trans,octa-cis-undecaprenyl phosphate + phosphate + H(+). In terms of biological role, catalyzes the dephosphorylation of undecaprenyl diphosphate (UPP). Confers resistance to bacitracin. This chain is Undecaprenyl-diphosphatase, found in Trichlorobacter lovleyi (strain ATCC BAA-1151 / DSM 17278 / SZ) (Geobacter lovleyi).